A 123-amino-acid polypeptide reads, in one-letter code: Small ribosomal subunit protein uS12 (123 aa).

D89 is subject to 3-methylthioaspartic acid. A disordered region spans residues 101 to 123 (SLDTAGVKDRKQSRSKYGAKRPK). Basic residues predominate over residues 113 to 123 (SRSKYGAKRPK).

The protein belongs to the universal ribosomal protein uS12 family. In terms of assembly, part of the 30S ribosomal subunit. Contacts proteins S8 and S17. May interact with IF1 in the 30S initiation complex.

With S4 and S5 plays an important role in translational accuracy. Functionally, interacts with and stabilizes bases of the 16S rRNA that are involved in tRNA selection in the A site and with the mRNA backbone. Located at the interface of the 30S and 50S subunits, it traverses the body of the 30S subunit contacting proteins on the other side and probably holding the rRNA structure together. The combined cluster of proteins S8, S12 and S17 appears to hold together the shoulder and platform of the 30S subunit. The chain is Small ribosomal subunit protein uS12 from Laribacter hongkongensis (strain HLHK9).